The primary structure comprises 248 residues: Triosephosphate isomerase (248 aa).

Asn-9–Lys-11 contributes to the substrate binding site. The Electrophile role is filled by His-94. The active-site Proton acceptor is the Glu-166. Substrate is bound by residues Gly-172, Ser-212, and Gly-233 to Gly-234.

The protein belongs to the triosephosphate isomerase family. Homodimer.

The protein resides in the cytoplasm. The enzyme catalyses D-glyceraldehyde 3-phosphate = dihydroxyacetone phosphate. It functions in the pathway carbohydrate biosynthesis; gluconeogenesis. The protein operates within carbohydrate degradation; glycolysis; D-glyceraldehyde 3-phosphate from glycerone phosphate: step 1/1. Involved in the gluconeogenesis. Catalyzes stereospecifically the conversion of dihydroxyacetone phosphate (DHAP) to D-glyceraldehyde-3-phosphate (G3P). This chain is Triosephosphate isomerase, found in Clostridium botulinum (strain ATCC 19397 / Type A).